A 428-amino-acid chain; its full sequence is MIIFKNLILKISSLRFAISLIIFIAIASGIGTFIPQDNNNKFYIDNFDRAPIFGLLDGEKVLKLQLDHIYTSFWFLFTLILLCISLAACSFRRQIPSLKASLKWIEYKSEKKFSKLQLTRSHPINQDGEHISKVDLLLKKKGWKTYKFNSHISARKGLIGKIGPLVVHIGLIVLLIGSAYGSFTSQSKEQYLLPGETLNLVNESTNSRANVKLVDFSIERESDGVPKQFISKLNFSSENLNLNEIKTTKVNHPIRFKGLTIYQADWAISNIVLEIDNILYQLQLKEIPEIGNQVWGVLVELGSETKKNYLLTIDNENGPLKISNIENFSGNNLYINEDPLEVNSSKVSLKKIIPSSGLIIKNDPSIPFIYFSFILIIFGTIISLIPTNQLWILVNKESQKLSIGGLSNKNLVGFKKEFFKLSDEIKNF.

3 helical membrane passes run 14–34 (LRFAISLIIFIAIASGIGTFI), 72–92 (SFWFLFTLILLCISLAACSFR), and 162–182 (IGPLVVHIGLIVLLIGSAYGS).

Belongs to the Ccs1/CcsB family. May interact with CcsA.

It is found in the cellular thylakoid membrane. Functionally, required during biogenesis of c-type cytochromes (cytochrome c6 and cytochrome f) at the step of heme attachment. The chain is Cytochrome c biogenesis protein CcsB from Prochlorococcus marinus (strain AS9601).